The chain runs to 183 residues: Probable adenylyl-sulfate kinase (183 aa).

Gly-17–Thr-24 provides a ligand contact to ATP. Ser-91 acts as the Phosphoserine intermediate in catalysis.

It belongs to the APS kinase family.

It carries out the reaction adenosine 5'-phosphosulfate + ATP = 3'-phosphoadenylyl sulfate + ADP + H(+). It participates in sulfur metabolism; hydrogen sulfide biosynthesis; sulfite from sulfate: step 2/3. In terms of biological role, catalyzes the synthesis of activated sulfate. In Aeropyrum pernix (strain ATCC 700893 / DSM 11879 / JCM 9820 / NBRC 100138 / K1), this protein is Probable adenylyl-sulfate kinase (cysC).